The following is a 373-amino-acid chain: Cell division protein FtsZ 1 (373 aa).

GTP contacts are provided by residues 51–55 (GAGCN), 138–140 (GTG), E169, R173, and D216. Positions 354–373 (EESYFGEEERRPIKLDLDEL) are disordered. A compositionally biased stretch (basic and acidic residues) spans 360–373 (EEERRPIKLDLDEL).

It belongs to the FtsZ family. As to quaternary structure, homodimer. Polymerizes to form a dynamic ring structure in a strictly GTP-dependent manner. Interacts directly with several other division proteins.

Its subcellular location is the cytoplasm. Its function is as follows. Essential cell division protein that forms a contractile ring structure (Z ring) at the future cell division site. The regulation of the ring assembly controls the timing and the location of cell division. One of the functions of the FtsZ ring is to recruit other cell division proteins to the septum to produce a new cell wall between the dividing cells. Binds GTP and shows GTPase activity. This is Cell division protein FtsZ 1 from Thermococcus kodakarensis (strain ATCC BAA-918 / JCM 12380 / KOD1) (Pyrococcus kodakaraensis (strain KOD1)).